A 173-amino-acid polypeptide reads, in one-letter code: Crossover junction endodeoxyribonuclease RuvC (173 aa).

Residues aspartate 8, glutamate 69, and aspartate 141 contribute to the active site. Mg(2+)-binding residues include aspartate 8, glutamate 69, and aspartate 141.

Belongs to the RuvC family. As to quaternary structure, homodimer which binds Holliday junction (HJ) DNA. The HJ becomes 2-fold symmetrical on binding to RuvC with unstacked arms; it has a different conformation from HJ DNA in complex with RuvA. In the full resolvosome a probable DNA-RuvA(4)-RuvB(12)-RuvC(2) complex forms which resolves the HJ. The cofactor is Mg(2+).

The protein localises to the cytoplasm. The enzyme catalyses Endonucleolytic cleavage at a junction such as a reciprocal single-stranded crossover between two homologous DNA duplexes (Holliday junction).. In terms of biological role, the RuvA-RuvB-RuvC complex processes Holliday junction (HJ) DNA during genetic recombination and DNA repair. Endonuclease that resolves HJ intermediates. Cleaves cruciform DNA by making single-stranded nicks across the HJ at symmetrical positions within the homologous arms, yielding a 5'-phosphate and a 3'-hydroxyl group; requires a central core of homology in the junction. The consensus cleavage sequence is 5'-(A/T)TT(C/G)-3'. Cleavage occurs on the 3'-side of the TT dinucleotide at the point of strand exchange. HJ branch migration catalyzed by RuvA-RuvB allows RuvC to scan DNA until it finds its consensus sequence, where it cleaves and resolves the cruciform DNA. The chain is Crossover junction endodeoxyribonuclease RuvC from Xylella fastidiosa (strain Temecula1 / ATCC 700964).